The sequence spans 383 residues: Succinyl-diaminopimelate desuccinylase (383 aa).

H74 contacts Zn(2+). The active site involves D76. Position 107 (D107) interacts with Zn(2+). Residue E141 is the Proton acceptor of the active site. Zn(2+)-binding residues include E142, E170, and H356.

It belongs to the peptidase M20A family. DapE subfamily. Homodimer. Requires Zn(2+) as cofactor. Co(2+) is required as a cofactor.

The catalysed reaction is N-succinyl-(2S,6S)-2,6-diaminopimelate + H2O = (2S,6S)-2,6-diaminopimelate + succinate. It functions in the pathway amino-acid biosynthesis; L-lysine biosynthesis via DAP pathway; LL-2,6-diaminopimelate from (S)-tetrahydrodipicolinate (succinylase route): step 3/3. Catalyzes the hydrolysis of N-succinyl-L,L-diaminopimelic acid (SDAP), forming succinate and LL-2,6-diaminopimelate (DAP), an intermediate involved in the bacterial biosynthesis of lysine and meso-diaminopimelic acid, an essential component of bacterial cell walls. The polypeptide is Succinyl-diaminopimelate desuccinylase (Cupriavidus pinatubonensis (strain JMP 134 / LMG 1197) (Cupriavidus necator (strain JMP 134))).